The chain runs to 55 residues: Large ribosomal subunit protein bL33 (55 aa).

It belongs to the bacterial ribosomal protein bL33 family.

The protein is Large ribosomal subunit protein bL33 of Alcanivorax borkumensis (strain ATCC 700651 / DSM 11573 / NCIMB 13689 / SK2).